We begin with the raw amino-acid sequence, 297 residues long: Putative thiosulfate sulfurtransferase SseA (297 aa).

Rhodanese domains follow at residues 31–138 (GAPG…ETTL) and 168–286 (ILDA…VPIV). Catalysis depends on Cys245, which acts as the Cysteine persulfide intermediate. A substrate-binding site is contributed by Arg250.

The enzyme catalyses thiosulfate + hydrogen cyanide = thiocyanate + sulfite + 2 H(+). The sequence is that of Putative thiosulfate sulfurtransferase SseA (sseA) from Mycobacterium bovis (strain ATCC BAA-935 / AF2122/97).